The primary structure comprises 853 residues: DNA mismatch repair protein MutS (853 aa).

Residue 614–621 (GPNMGGKS) coordinates ATP.

This sequence belongs to the DNA mismatch repair MutS family.

Its function is as follows. This protein is involved in the repair of mismatches in DNA. It is possible that it carries out the mismatch recognition step. This protein has a weak ATPase activity. The polypeptide is DNA mismatch repair protein MutS (Escherichia fergusonii (strain ATCC 35469 / DSM 13698 / CCUG 18766 / IAM 14443 / JCM 21226 / LMG 7866 / NBRC 102419 / NCTC 12128 / CDC 0568-73)).